The sequence spans 197 residues: UDP-N-acetylglucosamine transferase subunit alg13 (197 aa).

The segment at 174–197 (VRGPDQKNQPTLEQVMSDEMGFVD) is disordered.

This sequence belongs to the glycosyltransferase 28 family. In terms of assembly, heterodimer with alg14 to form a functional enzyme.

It localises to the endoplasmic reticulum. It catalyses the reaction an N-acetyl-alpha-D-glucosaminyl-diphospho-di-trans,poly-cis-dolichol + UDP-N-acetyl-alpha-D-glucosamine = an N,N'-diacetylchitobiosyl-diphospho-di-trans,poly-cis-dolichol + UDP + H(+). Its function is as follows. Involved in protein N-glycosylation. Essential for the second step of the dolichol-linked oligosaccharide pathway. The polypeptide is UDP-N-acetylglucosamine transferase subunit alg13 (alg13) (Aspergillus fumigatus (strain ATCC MYA-4609 / CBS 101355 / FGSC A1100 / Af293) (Neosartorya fumigata)).